The following is a 247-amino-acid chain: Segregation and condensation protein A (247 aa).

This sequence belongs to the ScpA family. In terms of assembly, component of a cohesin-like complex composed of ScpA, ScpB and the Smc homodimer, in which ScpA and ScpB bind to the head domain of Smc. The presence of the three proteins is required for the association of the complex with DNA.

The protein localises to the cytoplasm. Its function is as follows. Participates in chromosomal partition during cell division. May act via the formation of a condensin-like complex containing Smc and ScpB that pull DNA away from mid-cell into both cell halves. The chain is Segregation and condensation protein A from Caldanaerobacter subterraneus subsp. tengcongensis (strain DSM 15242 / JCM 11007 / NBRC 100824 / MB4) (Thermoanaerobacter tengcongensis).